The chain runs to 307 residues: MIKDKHLIDPMDFTVEELKEIFKLAHEIILDPEKFSHVCDGKILGTLFYEPSTRTRFSFEAAMMRLGGKILGFSEPNSSSASKGESLSDTIKMVSIYTDIIAMRHPKEGSAKVASLYSSVPIINAGDGGHQHPTQTLTDLLTIEMLKDGLSNHTIGICGDLKYGRTVHSLIKAMSRYKGNKFLLISPKELRIPDYIREEILRKNNIEFLEVETLEEVIDKVDILYMTRIQKERFFNEEEYLRLRDSYILNKEKMNLAKDDMIVMHPLPRVNEIACEVDYDKRAAYFKQAEYGMYARMALMAKLLGVL.

Arginine 54 and threonine 55 together coordinate carbamoyl phosphate. Lysine 83 contacts L-aspartate. Carbamoyl phosphate contacts are provided by arginine 104, histidine 132, and glutamine 135. Positions 165 and 228 each coordinate L-aspartate. The carbamoyl phosphate site is built by leucine 267 and proline 268.

Belongs to the aspartate/ornithine carbamoyltransferase superfamily. ATCase family. In terms of assembly, heterododecamer (2C3:3R2) of six catalytic PyrB chains organized as two trimers (C3), and six regulatory PyrI chains organized as three dimers (R2).

It catalyses the reaction carbamoyl phosphate + L-aspartate = N-carbamoyl-L-aspartate + phosphate + H(+). The protein operates within pyrimidine metabolism; UMP biosynthesis via de novo pathway; (S)-dihydroorotate from bicarbonate: step 2/3. Functionally, catalyzes the condensation of carbamoyl phosphate and aspartate to form carbamoyl aspartate and inorganic phosphate, the committed step in the de novo pyrimidine nucleotide biosynthesis pathway. This is Aspartate carbamoyltransferase catalytic subunit from Clostridium botulinum (strain Alaska E43 / Type E3).